The sequence spans 473 residues: Xylan O-acetyltransferase 14 (473 aa).

Over residues 1–17 the composition is skewed to polar residues; it reads MTTTGSTPPRKNRSNVT. The disordered stretch occupies residues 1-22; that stretch reads MTTTGSTPPRKNRSNVTGGEGG. Residues 1–54 are Cytoplasmic-facing; sequence MTTTGSTPPRKNRSNVTGGEGGSLEEYAWRAAGEAAAAKKATRAWGVSVSLRSH. A helical; Signal-anchor for type II membrane protein transmembrane segment spans residues 55–75; it reads FSSLVLLLLLLLVALAVSATT. A disordered region spans residues 76-101; it reads KNGDPAETPHAPPLPPPASIKLPSSS. Topologically, residues 76 to 473 are lumenal; it reads KNGDPAETPH…NQLLYAHIVS (398 aa). Disulfide bonds link cysteine 108/cysteine 159, cysteine 130/cysteine 195, cysteine 139/cysteine 455, and cysteine 370/cysteine 451. Positions 182 to 184 match the GDS motif motif; it reads GDS. Serine 184 functions as the Nucleophile in the catalytic mechanism. N-linked (GlcNAc...) asparagine glycosylation is found at asparagine 209, asparagine 223, and asparagine 414. Aspartate 450 serves as the catalytic Proton donor. The DXXH motif signature appears at 450–453; the sequence is DCIH. Histidine 453 (proton acceptor) is an active-site residue.

It belongs to the PC-esterase family. TBL subfamily.

It localises to the golgi apparatus membrane. Xylan acetyltransferase required for 2-O- and 3-O-monoacetylation of xylosyl residues in xylan. Catalyzes the 2-O-acetylation of xylan, followed by nonenzymatic acetyl migration to the O-3 position, resulting in products that are monoacetylated at both O-2 and O-3 positions. The protein is Xylan O-acetyltransferase 14 of Oryza sativa subsp. japonica (Rice).